The chain runs to 93 residues: Integration host factor subunit beta (93 aa).

The protein belongs to the bacterial histone-like protein family. In terms of assembly, heterodimer of an alpha and a beta chain.

Its function is as follows. This protein is one of the two subunits of integration host factor, a specific DNA-binding protein that functions in genetic recombination as well as in transcriptional and translational control. In Vibrio parahaemolyticus serotype O3:K6 (strain RIMD 2210633), this protein is Integration host factor subunit beta.